Here is a 554-residue protein sequence, read N- to C-terminus: DnaJ homolog subfamily C member 1 (554 aa).

An N-terminal signal peptide occupies residues 1–47 (MTAPCSQPAQLPGRRQLGLVPFPPPPPRTPLLWLLLLLLAAVAPARG). Residues 48-153 (WESGDLELFD…RRVRKMSNAE (106 aa)) are Lumenal-facing. The region spanning 65 to 129 (NFYQFLGVQQ…ERRQRYDDIL (65 aa)) is the J domain. A helical transmembrane segment spans residues 154–174 (LALLLFIILTVGHYAVVWSIY). Topologically, residues 175–554 (LEKQLDELLS…LVQKKKQAKS (380 aa)) are cytoplasmic. One can recognise an SANT 1 domain in the interval 325-379 (KQAPEWTEEDLSQLTRSMVKFPGGTPGRWEKIAHELGRSVTDVTTKAKQLKDSVT). A Phosphoserine modification is found at Ser381. Polar residues predominate over residues 392–405 (STVQNSRPIKTATT). Residues 392–500 (STVQNSRPIK…RSAEEPWTQN (109 aa)) form a disordered region. Over residues 421 to 432 (AAEEEQEGDSGE) the composition is skewed to acidic residues. Position 430 is a phosphoserine (Ser430). Basic and acidic residues predominate over residues 455–472 (AKPEPEEKSRAKRQKDFD). Positions 473 to 482 (IAEQNESSDE) are enriched in acidic residues. Phosphoserine is present on residues Ser479, Ser480, Ser484, and Ser492. Over residues 483-494 (ESLRKERARSAE) the composition is skewed to basic and acidic residues. The SANT 2 domain occupies 492-547 (SAEEPWTQNQQKLLELALQQYPRGSSDRWDKIARCVPSKSKEDCIARYKLLVELVQ).

In terms of assembly, interacts (via J domain) with HSPA5. Interacts (via cytosolic domain) with ribosomes. Interacts (via SANT 2 domain) with SERPINA3; the interaction delays the formation of the covalent inhibitory complex SERPINA3-chymotrypsin, but does not alter the catalytic activity of SERPINA3. Interacts (via SANT 2 domain) with ITIH4 (via C-terminus); the interaction protects ITIH4 against in vitro cleavage by kallikrein.

It localises to the endoplasmic reticulum membrane. It is found in the nucleus membrane. Its subcellular location is the microsome membrane. Functionally, may modulate protein synthesis. The protein is DnaJ homolog subfamily C member 1 (DNAJC1) of Homo sapiens (Human).